We begin with the raw amino-acid sequence, 247 residues long: Cytochrome c oxidase subunit 2 (247 aa).

A signal peptide spans 1-11 (MLLIINNIINN). Topologically, residues 12 to 38 (DVPTPWGVYFQDSATPNHEGIIELHDN) are mitochondrial intermembrane. A helical transmembrane segment spans residues 39-59 (IMFYLVLILCLVSWLLFSIVK). The Mitochondrial matrix segment spans residues 60–78 (DGSKNPLPHKYLVHGQTIE). The chain crosses the membrane as a helical span at residues 79–101 (IIWTILPALVLLVIAFPSFILLY). At 102–247 (LCDEVISPAM…KEFLTWLNEQ (146 aa)) the chain is on the mitochondrial intermembrane side. Positions 182, 217, 219, 221, 225, and 228 each coordinate Cu cation. Glutamate 219 provides a ligand contact to Mg(2+).

It belongs to the cytochrome c oxidase subunit 2 family. Component of the cytochrome c oxidase (complex IV, CIV), a multisubunit enzyme composed of a catalytic core of 3 subunits and several supernumerary subunits. The complex exists as a monomer or a dimer and forms supercomplexes (SCs) in the inner mitochondrial membrane with ubiquinol-cytochrome c oxidoreductase (cytochrome b-c1 complex, complex III, CIII). Requires Cu cation as cofactor. In terms of processing, the signal sequence of COX2 is processed by IMP1.

Its subcellular location is the mitochondrion inner membrane. The catalysed reaction is 4 Fe(II)-[cytochrome c] + O2 + 8 H(+)(in) = 4 Fe(III)-[cytochrome c] + 2 H2O + 4 H(+)(out). Functionally, component of the cytochrome c oxidase, the last enzyme in the mitochondrial electron transport chain which drives oxidative phosphorylation. The respiratory chain contains 3 multisubunit complexes succinate dehydrogenase (complex II, CII), ubiquinol-cytochrome c oxidoreductase (cytochrome b-c1 complex, complex III, CIII) and cytochrome c oxidase (complex IV, CIV), that cooperate to transfer electrons derived from NADH and succinate to molecular oxygen, creating an electrochemical gradient over the inner membrane that drives transmembrane transport and the ATP synthase. Cytochrome c oxidase is the component of the respiratory chain that catalyzes the reduction of oxygen to water. Electrons originating from reduced cytochrome c in the intermembrane space (IMS) are transferred via the dinuclear copper A center (CU(A)) of subunit 2 and heme A of subunit 1 to the active site in subunit 1, a binuclear center (BNC) formed by heme A3 and copper B (CU(B)). The BNC reduces molecular oxygen to 2 water molecules using 4 electrons from cytochrome c in the IMS and 4 protons from the mitochondrial matrix. This chain is Cytochrome c oxidase subunit 2 (COX2), found in Wickerhamomyces canadensis (Yeast).